Here is a 148-residue protein sequence, read N- to C-terminus: Aspartate 1-decarboxylase (148 aa).

The active-site Schiff-base intermediate with substrate; via pyruvic acid is serine 25. Serine 25 carries the pyruvic acid (Ser) modification. A substrate-binding site is contributed by threonine 57. Tyrosine 58 functions as the Proton donor in the catalytic mechanism. Residue 73-75 (GAA) coordinates substrate.

Belongs to the PanD family. In terms of assembly, heterooctamer of four alpha and four beta subunits. It depends on pyruvate as a cofactor. Post-translationally, is synthesized initially as an inactive proenzyme, which is activated by self-cleavage at a specific serine bond to produce a beta-subunit with a hydroxyl group at its C-terminus and an alpha-subunit with a pyruvoyl group at its N-terminus.

It localises to the cytoplasm. The enzyme catalyses L-aspartate + H(+) = beta-alanine + CO2. It participates in cofactor biosynthesis; (R)-pantothenate biosynthesis; beta-alanine from L-aspartate: step 1/1. Functionally, catalyzes the pyruvoyl-dependent decarboxylation of aspartate to produce beta-alanine. The protein is Aspartate 1-decarboxylase of Rhodococcus jostii (strain RHA1).